A 289-amino-acid chain; its full sequence is Probable WRKY transcription factor 38 (289 aa).

The disordered stretch occupies residues 62–103 (PETEDDQFSDLSSRDSSPPPQGSPSKKRKIDSTNSSENWRDD). Residues 104–172 (SPDPIYYDGY…YFGHHTCKTE (69 aa)) constitute a DNA-binding region (WRKY). Residues 249–266 (LSSPSGSYPPSSSSGSES) are compositionally biased toward low complexity. Residues 249 to 278 (LSSPSGSYPPSSSSGSESADFNSDLLFDNP) form a disordered region.

Belongs to the WRKY group III family.

It localises to the nucleus. Functionally, transcription factor. Interacts specifically with the W box (5'-(T)TGAC[CT]-3'), a frequently occurring elicitor-responsive cis-acting element. The sequence is that of Probable WRKY transcription factor 38 (WRKY38) from Arabidopsis thaliana (Mouse-ear cress).